Here is a 324-residue protein sequence, read N- to C-terminus: Glutamyl-Q tRNA(Asp) synthetase (324 aa).

L-glutamate is bound by residues arginine 5 to serine 9 and glutamate 41. The 'HIGH' region motif lies at proline 8–asparagine 18. Zn(2+)-binding residues include cysteine 105, cysteine 107, tyrosine 128, and cysteine 132. The L-glutamate site is built by tyrosine 193 and arginine 211. A 'KMSKS' region motif is present at residues arginine 249–arginine 253. Residue lysine 252 coordinates ATP.

It belongs to the class-I aminoacyl-tRNA synthetase family. GluQ subfamily. Zn(2+) serves as cofactor.

Functionally, catalyzes the tRNA-independent activation of glutamate in presence of ATP and the subsequent transfer of glutamate onto a tRNA(Asp). Glutamate is transferred on the 2-amino-5-(4,5-dihydroxy-2-cyclopenten-1-yl) moiety of the queuosine in the wobble position of the QUC anticodon. This chain is Glutamyl-Q tRNA(Asp) synthetase, found in Nitratidesulfovibrio vulgaris (strain ATCC 29579 / DSM 644 / CCUG 34227 / NCIMB 8303 / VKM B-1760 / Hildenborough) (Desulfovibrio vulgaris).